We begin with the raw amino-acid sequence, 597 residues long: Alkyldihydroxyacetonephosphate synthase (597 aa).

The region spanning 131-313 is the FAD-binding PCMH-type domain; it reads IPRLPDIVVW…SEVTIKIFPI (183 aa). FAD contacts are provided by residues 163-169, 232-238, 245-248, and 297-303; these read PIGGGTS, DSIEFST, TRAS, and EGTLGVV. Position 444 (Arg-444) interacts with substrate. Tyr-507 (proton donor/acceptor) is an active-site residue. The tract at residues 544-546 is important for enzyme activity; sequence HHH. The Microbody targeting signal signature appears at 595–597; that stretch reads CKL.

The protein belongs to the FAD-binding oxidoreductase/transferase type 4 family. Homodimer. FAD is required as a cofactor.

Its subcellular location is the peroxisome. It catalyses the reaction a long chain fatty alcohol + a 1-acylglycerone 3-phosphate = a 1-O-alkylglycerone 3-phosphate + a long-chain fatty acid + H(+). It functions in the pathway glycerolipid metabolism; ether lipid biosynthesis. Functionally, catalyzes the exchange of an acyl for a long-chain alkyl group and the formation of the ether bond in the biosynthesis of ether phospholipids. This chain is Alkyldihydroxyacetonephosphate synthase (ads-1), found in Caenorhabditis elegans.